The following is a 538-amino-acid chain: CTP synthase (538 aa).

The amidoligase domain stretch occupies residues 1 to 270 (MSRTKFIFVT…DEVVLKTMGM (270 aa)). Position 15 (serine 15) interacts with CTP. Position 15 (serine 15) interacts with UTP. An ATP-binding site is contributed by 16-21 (SLGKGV). Residue tyrosine 56 coordinates L-glutamine. Residue aspartate 73 participates in ATP binding. Mg(2+) is bound by residues aspartate 73 and glutamate 143. CTP contacts are provided by residues 150-152 (DIE), 190-195 (KTKPTQ), and lysine 226. UTP is bound by residues 190-195 (KTKPTQ) and lysine 226. The region spanning 295-537 (QIAVVGKYIS…IRASVKYSKK (243 aa)) is the Glutamine amidotransferase type-1 domain. Glycine 357 is an L-glutamine binding site. The Nucleophile; for glutamine hydrolysis role is filled by cysteine 384. L-glutamine-binding positions include 385-388 (LGMQ), glutamate 408, and arginine 465. Residues histidine 510 and glutamate 512 contribute to the active site.

It belongs to the CTP synthase family. As to quaternary structure, homotetramer.

It catalyses the reaction UTP + L-glutamine + ATP + H2O = CTP + L-glutamate + ADP + phosphate + 2 H(+). The enzyme catalyses L-glutamine + H2O = L-glutamate + NH4(+). The catalysed reaction is UTP + NH4(+) + ATP = CTP + ADP + phosphate + 2 H(+). Its pathway is pyrimidine metabolism; CTP biosynthesis via de novo pathway; CTP from UDP: step 2/2. Its activity is regulated as follows. Allosterically activated by GTP, when glutamine is the substrate; GTP has no effect on the reaction when ammonia is the substrate. The allosteric effector GTP functions by stabilizing the protein conformation that binds the tetrahedral intermediate(s) formed during glutamine hydrolysis. Inhibited by the product CTP, via allosteric rather than competitive inhibition. Catalyzes the ATP-dependent amination of UTP to CTP with either L-glutamine or ammonia as the source of nitrogen. Regulates intracellular CTP levels through interactions with the four ribonucleotide triphosphates. The sequence is that of CTP synthase from Leptospira interrogans serogroup Icterohaemorrhagiae serovar copenhageni (strain Fiocruz L1-130).